The sequence spans 395 residues: General transcription factor IIH subunit 2-like protein (395 aa).

The VWFA domain occupies 60–236 (HLYVVVDGSR…HYKELLTHHL (177 aa)). Tyr95 carries the post-translational modification Phosphotyrosine. The C4-type zinc finger occupies 291 to 308 (CPQCRAKYCELPVECKIC).

It belongs to the GTF2H2 family.

The protein localises to the nucleus. Functionally, component of the core-TFIIH basal transcription factor involved in nucleotide excision repair (NER) of DNA and, when complexed to CAK, in RNA transcription by RNA polymerase II. This chain is General transcription factor IIH subunit 2-like protein (GTF2H2C), found in Homo sapiens (Human).